Reading from the N-terminus, the 451-residue chain is Adenylyltransferase and sulfurtransferase MOCS3 (451 aa).

Threonine 60 is modified (phosphothreonine). Residues glycine 99, aspartate 120, 127-131, lysine 144, and 188-189 each bind ATP; these read SNFHR and DN. Positions 229 and 232 each coordinate Zn(2+). The active-site Glycyl thioester intermediate; for adenylyltransferase activity is the cysteine 246. Zn(2+)-binding residues include cysteine 304 and cysteine 307. The Rhodanese domain maps to 353-449; the sequence is QQQPHLLIDV…WTHKVDPSFP (97 aa). The active-site Cysteine persulfide intermediate; for sulfurtransferase activity is the cysteine 408.

It in the N-terminal section; belongs to the HesA/MoeB/ThiF family. UBA4 subfamily. Zn(2+) serves as cofactor.

The protein localises to the cytoplasm. It is found in the cytosol. It carries out the reaction [molybdopterin-synthase sulfur-carrier protein]-C-terminal Gly-Gly + ATP + H(+) = [molybdopterin-synthase sulfur-carrier protein]-C-terminal Gly-Gly-AMP + diphosphate. The catalysed reaction is [molybdopterin-synthase sulfur-carrier protein]-C-terminal Gly-Gly-AMP + S-sulfanyl-L-cysteinyl-[cysteine desulfurase] + AH2 = [molybdopterin-synthase sulfur-carrier protein]-C-terminal-Gly-aminoethanethioate + L-cysteinyl-[cysteine desulfurase] + A + AMP + 2 H(+). The protein operates within tRNA modification; 5-methoxycarbonylmethyl-2-thiouridine-tRNA biosynthesis. Its pathway is cofactor biosynthesis; molybdopterin biosynthesis. Plays a central role in 2-thiolation of mcm(5)S(2)U at tRNA wobble positions of cytosolic tRNA(Lys), tRNA(Glu) and tRNA(Gln). Also essential during biosynthesis of the molybdenum cofactor. Acts by mediating the C-terminal thiocarboxylation of sulfur carriers URM1 and MOCS2A. Its N-terminus first activates URM1 and MOCS2A as acyl-adenylates (-COAMP), then the persulfide sulfur on the catalytic cysteine is transferred to URM1 and MOCS2A to form thiocarboxylation (-COSH) of their C-terminus. The reaction probably involves hydrogen sulfide that is generated from the persulfide intermediate and that acts as a nucleophile towards URM1 and MOCS2A. Subsequently, a transient disulfide bond is formed. Does not use thiosulfate as sulfur donor; NFS1 probably acting as a sulfur donor for thiocarboxylation reactions. The polypeptide is Adenylyltransferase and sulfurtransferase MOCS3 (Drosophila ananassae (Fruit fly)).